The sequence spans 124 residues: Holo-[acyl-carrier-protein] synthase (124 aa).

Residues Asp5 and Glu56 each contribute to the Mg(2+) site.

It belongs to the P-Pant transferase superfamily. AcpS family. Mg(2+) serves as cofactor.

It is found in the cytoplasm. The enzyme catalyses apo-[ACP] + CoA = holo-[ACP] + adenosine 3',5'-bisphosphate + H(+). Functionally, transfers the 4'-phosphopantetheine moiety from coenzyme A to a Ser of acyl-carrier-protein. The polypeptide is Holo-[acyl-carrier-protein] synthase (Campylobacter hominis (strain ATCC BAA-381 / DSM 21671 / CCUG 45161 / LMG 19568 / NCTC 13146 / CH001A)).